The primary structure comprises 147 residues: Large ribosomal subunit protein bL9 (147 aa).

Belongs to the bacterial ribosomal protein bL9 family.

Binds to the 23S rRNA. The protein is Large ribosomal subunit protein bL9 of Bacteroides fragilis (strain YCH46).